The primary structure comprises 265 residues: F-box only protein 6 (265 aa).

The F-box domain maps to Leu3–Lys50. Residues Phe71 to His252 form the FBA domain. Ser251 bears the Phosphoserine mark.

As to quaternary structure, part of a SCF (SKP1-cullin-F-box) protein ligase complex. Interacts with VCP, CHEK1 and CUL1.

It is found in the cytoplasm. Its pathway is protein modification; protein ubiquitination. Substrate-recognition component of some SCF (SKP1-CUL1-F-box protein)-type E3 ubiquitin ligase complexes. Involved in endoplasmic reticulum-associated degradation pathway (ERAD) for misfolded lumenal proteins by recognizing and binding sugar chains on unfolded glycoproteins that are retrotranslocated into the cytosol and promoting their ubiquitination and subsequent degradation. Able to recognize and bind denatured glycoproteins, which are modified with not only high-mannose but also complex-type oligosaccharides. Also recognizes sulfated glycans. Also involved in DNA damage response by specifically recognizing activated CHEK1 (phosphorylated on 'Ser-345'), promoting its ubiquitination and degradation. Ubiquitination of CHEK1 is required to ensure that activated CHEK1 does not accumulate as cells progress through S phase, or when replication forks encounter transient impediments during normal DNA replication. The polypeptide is F-box only protein 6 (FBXO6) (Bos taurus (Bovine)).